Reading from the N-terminus, the 1161-residue chain is Lysine-specific demethylase 2A (1161 aa).

A Phosphoserine modification is found at S28. In terms of domain architecture, JmjC spans 148 to 316 (FSHTRLENMV…MQLKIYSIED (169 aa)). Residue T209 coordinates substrate. Fe cation contacts are provided by H212 and D214. K229 serves as a coordination point for substrate. Residue H284 coordinates Fe cation. Phosphoserine occurs at positions 390 and 394. Over residues 419-433 (KTLSGDSSSDSTRGS) the composition is skewed to low complexity. The disordered stretch occupies residues 419-445 (KTLSGDSSSDSTRGSHNGQVWDPQCSP). Phosphoserine is present on S444. K505 participates in a covalent cross-link: Glycyl lysine isopeptide (Lys-Gly) (interchain with G-Cter in SUMO2). The interval 532–557 (VPTIPITKPHTMKPAPRLTPVRPAAA) is disordered. T550 is subject to Phosphothreonine. S558 carries the post-translational modification Phosphoserine. The CXXC-type zinc-finger motif lies at 564-610 (ARRRRVRCRKCKACVQGECGVCHYCRDMKKFGGPGRMKQSCVLRQCL). C571, C574, C577, C582, C585, C588, C604, C609, C620, and C623 together coordinate Zn(2+). The PHD-type zinc-finger motif lies at 617–678 (SVTCSLCGEV…CWECPKCYQE (62 aa)). Residue T632 is modified to Phosphothreonine. C642, C645, H650, C653, C672, and C675 together coordinate Zn(2+). Phosphoserine is present on S692. Positions 705–789 (LRSCEEPLTP…PSGKKELSEV (85 aa)) are disordered. T713 carries the phosphothreonine modification. S718 and S731 each carry phosphoserine. Basic and acidic residues-rich tracts occupy residues 746-757 (SDHHSASRDERF) and 771-789 (TMVREKENNPSGKKELSEV). 3 positions are modified to phosphoserine: S825, S868, and S882. Positions 840 to 886 (CPARNPQHGDEEGLGGEEEEEEEEEEDDSAEEGGAARLNGRGSWAQD) are disordered. The span at 851 to 870 (EGLGGEEEEEEEEEEDDSAE) shows a compositional bias: acidic residues. One can recognise an F-box domain in the interval 888-935 (DESWMQREVWMSVFRYLSRKELCECMRVCKTWYKWCCDKRLWTKIDLS). 2 LRR repeats span residues 960–981 (WTNISKKQLTWLVNRLPGLKDL) and 983–1009 (LAGCSWSAVSALSTSSCPLLRTLDLRW). Residue R1019 is modified to ADP-ribosylarginine. LRR repeat units follow at residues 1047 to 1072 (GLDITDATLRLIIRHMPLLSRLDLSH), 1073 to 1102 (CSHLTDQSSNLLTAVGSSTRYSLTELNMAG), 1103 to 1127 (CNKLTDQTLFFLRRIANVTLIDLRG), and 1128 to 1155 (CKQITRKACEHFISDLSINSLYCLSDEK).

The protein belongs to the JHDM1 histone demethylase family. In terms of assembly, part of a SCF (SKP1-cullin-F-box) protein ligase complex. Interacts with CBX5/HP1A; the interaction promotes CBX5 localization to chromatin. The SKP1-KDM2A complex interacts with UBB. Fe(2+) is required as a cofactor. Post-translationally, mono-ADP-ribosylated at Arg-1019 in response to DNA damage, leading to displacement from chromatin, resulting in increased dimethylation of histone H3 at 'Lys-36'.

The protein resides in the nucleus. The protein localises to the nucleoplasm. It localises to the chromosome. The catalysed reaction is N(6),N(6)-dimethyl-L-lysyl(36)-[histone H3] + 2 2-oxoglutarate + 2 O2 = L-lysyl(36)-[histone H3] + 2 formaldehyde + 2 succinate + 2 CO2. Its function is as follows. Histone demethylase that specifically demethylates 'Lys-36' of histone H3, thereby playing a central role in histone code. Preferentially demethylates dimethylated H3 'Lys-36' residue while it has weak or no activity for mono- and tri-methylated H3 'Lys-36'. May also recognize and bind to some phosphorylated proteins and promote their ubiquitination and degradation. Required to maintain the heterochromatic state. Associates with centromeres and represses transcription of small non-coding RNAs that are encoded by the clusters of satellite repeats at the centromere. Required to sustain centromeric integrity and genomic stability, particularly during mitosis. Regulates circadian gene expression by repressing the transcriptional activator activity of CLOCK-BMAL1 heterodimer and RORA in a catalytically-independent manner. This chain is Lysine-specific demethylase 2A (Kdm2a), found in Mus musculus (Mouse).